Consider the following 440-residue polypeptide: Chromosomal replication initiator protein DnaA (440 aa).

The tract at residues 1-93 (MNVQLNEIWN…QTPVKPVAQE (93 aa)) is domain I, interacts with DnaA modulators. The interval 94–101 (YTEDSNMS) is domain II. Positions 102-318 (FLNPKYTFDT…GALNRVIAYS (217 aa)) are domain III, AAA+ region. Glycine 146, glycine 148, lysine 149, and threonine 150 together coordinate ATP. Positions 319 to 440 (TLTENIINVD…EEIKKNITGG (122 aa)) are domain IV, binds dsDNA.

This sequence belongs to the DnaA family. Oligomerizes as a right-handed, spiral filament on DNA at oriC.

The protein resides in the cytoplasm. Plays an essential role in the initiation and regulation of chromosomal replication. ATP-DnaA binds to the origin of replication (oriC) to initiate formation of the DNA replication initiation complex once per cell cycle. Binds the DnaA box (a 9 base pair repeat at the origin) and separates the double-stranded (ds)DNA. Forms a right-handed helical filament on oriC DNA; dsDNA binds to the exterior of the filament while single-stranded (ss)DNA is stabiized in the filament's interior. The ATP-DnaA-oriC complex binds and stabilizes one strand of the AT-rich DNA unwinding element (DUE), permitting loading of DNA polymerase. After initiation quickly degrades to an ADP-DnaA complex that is not apt for DNA replication. Binds acidic phospholipids. This Ruminiclostridium cellulolyticum (strain ATCC 35319 / DSM 5812 / JCM 6584 / H10) (Clostridium cellulolyticum) protein is Chromosomal replication initiator protein DnaA.